The following is a 567-amino-acid chain: Cytochrome P450 monooxygenase 231 (567 aa).

Residues valine 3–tyrosine 23 form a helical membrane-spanning segment. Asparagine 81 and asparagine 223 each carry an N-linked (GlcNAc...) asparagine glycan. Cysteine 475 lines the heme pocket.

It belongs to the cytochrome P450 family. Heme serves as cofactor.

The protein resides in the membrane. The protein operates within secondary metabolite biosynthesis. In terms of biological role, cytochrome P450 monooxygenase that is able to use anthracene, carbazole, pyrene, and phenanthrene as substrates for oxidation. These multifunctional properties against a series of polycyclic aromatic hydrocarbons (PAHs) suggest that CYP231 would play important roles, at least in part, in fungal metabolic systems involved in xenobiotic detoxification. The sequence is that of Cytochrome P450 monooxygenase 231 from Postia placenta (strain ATCC 44394 / Madison 698-R) (Brown rot fungus).